Here is a 1213-residue protein sequence, read N- to C-terminus: Genetic suppressor element 1 (1213 aa).

The tract at residues 1 to 154 (MKGMSHEPKS…GSRGSSSGRE (154 aa)) is disordered. Residue Ser10 is modified to Phosphoserine. Polar residues predominate over residues 15-33 (MLSTATRTTATVNPLTPSP). Low complexity-rich tracts occupy residues 51–63 (SAQAAPSSSFAAA) and 76–89 (GSSLSSESSPVSSP). 2 positions are modified to phosphoserine: Ser84 and Ser95. The segment covering 103 to 114 (VPMGPIIVPPGG) has biased composition (low complexity). Arg305 carries the asymmetric dimethylarginine modification. Residues 319-402 (HSERMSSLSA…REKELLAAKA (84 aa)) adopt a coiled-coil conformation. The disordered stretch occupies residues 326-384 (LSAERLQMDEELRREREREREREREADREREKEREREQREKEREKELEREREKEREREL). Residues 331 to 384 (LQMDEELRREREREREREREADREREKEREREQREKEREKELEREREKEREREL) show a composition bias toward basic and acidic residues. Thr433 bears the Phosphothreonine mark. An N6-acetyllysine modification is found at Lys496. 2 disordered regions span residues 527–579 (LDLG…QHTV) and 630–719 (SEKA…TARG). 2 stretches are compositionally biased toward basic and acidic residues: residues 537-560 (EAEHRPESTRPGTNRHEQGSREPP) and 630-643 (SEKAEEPRKREATP). Residues 648–657 (QPPPPPPPPR) are compositionally biased toward pro residues. Over residues 681 to 700 (STQTILGQQRPSLSQATSFG) the composition is skewed to polar residues. Lys739 is subject to N6-acetyllysine. A phosphoserine mark is found at Ser766, Ser826, Ser828, and Ser857. Disordered stretches follow at residues 816–858 (RKRR…NNSP), 898–979 (LSAA…EAPG), and 1065–1118 (ELQS…PRRQ). A compositionally biased stretch (polar residues) spans 847–858 (TRYSPDEMNNSP). Thr905 carries the phosphothreonine modification. Ser907 is modified (phosphoserine). Over residues 1065–1081 (ELQSSSRVPLPQHNGQQ) the composition is skewed to polar residues. Positions 1093-1197 (QEADQDSEED…ELDHLRKCLA (105 aa)) form a coiled coil. A compositionally biased stretch (acidic residues) spans 1095–1112 (ADQDSEEDSEEDSEEEAE). Ser1099 carries the phosphoserine modification.

In terms of assembly, may be a component of a BHC histone deacetylase complex that contains HDAC1, HDAC2, HMG20B/BRAF35, KDM1A, RCOR1/CoREST, PHF21A/BHC80, ZMYM2, ZNF217, ZMYM3, GSE1 and GTF2I.

In Mus musculus (Mouse), this protein is Genetic suppressor element 1 (Gse1).